A 407-amino-acid polypeptide reads, in one-letter code: MSAVPLRNAKVAASGVRSVSVLGATGSIGDSTMDLLRASPERYQVEALTANTNVAGLAKLAREFNARFVAVADPARLSELRAALAGTGIACGAGDSAIVEAAERPADWVMAAVAGAAGLKPTLAAVDRGAHVALANKECLVCAGEFFMDRAAKAGATILPADSEHNALFQALASGNRDELTKVIITASGGPFRTWAAADIEQATLAQALKHPNWSMGQKITIDSASMMNKGLEVIEASWLFALSPDEIDVVVHPQSIIHGMVEFSDRSVVAQLGSPDMRTPIAHCLGWPDRIVGRAAPLDLAKIGTLTFEAPDYARFPGLKLAYEALRAGNGATTVYNAANEVAVAAFIAQRIRFGAIARLVEETMSSWIRAGNQAPLSCADDAIAVDHSARNMAAALLPQIAAKAS.

NADPH is bound by residues T25, G26, S27, I28, N53, and N136. K137 contacts 1-deoxy-D-xylulose 5-phosphate. E138 lines the NADPH pocket. Mn(2+) is bound at residue D162. The 1-deoxy-D-xylulose 5-phosphate site is built by S163, E164, S188, and H211. E164 contacts Mn(2+). G217 is an NADPH binding site. 1-deoxy-D-xylulose 5-phosphate contacts are provided by S224, N229, K230, and E233. E233 contacts Mn(2+).

Belongs to the DXR family. Mg(2+) serves as cofactor. The cofactor is Mn(2+).

It carries out the reaction 2-C-methyl-D-erythritol 4-phosphate + NADP(+) = 1-deoxy-D-xylulose 5-phosphate + NADPH + H(+). The protein operates within isoprenoid biosynthesis; isopentenyl diphosphate biosynthesis via DXP pathway; isopentenyl diphosphate from 1-deoxy-D-xylulose 5-phosphate: step 1/6. Functionally, catalyzes the NADPH-dependent rearrangement and reduction of 1-deoxy-D-xylulose-5-phosphate (DXP) to 2-C-methyl-D-erythritol 4-phosphate (MEP). The polypeptide is 1-deoxy-D-xylulose 5-phosphate reductoisomerase (Rhodopseudomonas palustris (strain BisB18)).